The following is a 478-amino-acid chain: Proline--tRNA ligase (478 aa).

It belongs to the class-II aminoacyl-tRNA synthetase family. ProS type 3 subfamily. As to quaternary structure, homodimer.

The protein localises to the cytoplasm. It carries out the reaction tRNA(Pro) + L-proline + ATP = L-prolyl-tRNA(Pro) + AMP + diphosphate. Functionally, catalyzes the attachment of proline to tRNA(Pro) in a two-step reaction: proline is first activated by ATP to form Pro-AMP and then transferred to the acceptor end of tRNA(Pro). This Ignicoccus hospitalis (strain KIN4/I / DSM 18386 / JCM 14125) protein is Proline--tRNA ligase.